Here is a 736-residue protein sequence, read N- to C-terminus: Cytosolic neutral trehalase (736 aa).

A disordered region spans residues 1–47 (MSEAPQARRVGSVDDHSVYDDAKTYYTSEERHNNSRSGPRQRTYSQN). The segment covering 11–33 (GSVDDHSVYDDAKTYYTSEERHN) has biased composition (basic and acidic residues). Residues 35–47 (SRSGPRQRTYSQN) show a composition bias toward polar residues. Ca(2+)-binding residues include Asp92, Asp94, Asn96, Gln98, and Asp103. Substrate contacts are provided by residues Arg279, 286–287 (WD), Asn323, 332–334 (RSQ), Glu399, Arg448, and Gly451. Active-site proton donor/acceptor residues include Asp453 and Glu657.

It belongs to the glycosyl hydrolase 37 family. Requires Ca(2+) as cofactor.

It is found in the cytoplasm. It catalyses the reaction alpha,alpha-trehalose + H2O = alpha-D-glucose + beta-D-glucose. Its pathway is carbohydrate degradation. In terms of biological role, hydrolyzes intracellular trehalose to glucose. Plays a role in pathogenicity, specifically in proliferation of invasive hyphae in rice blast disease. This is Cytosolic neutral trehalase (NTH1) from Pyricularia oryzae (strain 70-15 / ATCC MYA-4617 / FGSC 8958) (Rice blast fungus).